A 351-amino-acid chain; its full sequence is Adenine deaminase (351 aa).

H20, H22, and H200 together coordinate Zn(2+). Catalysis depends on E203, which acts as the Proton donor. Zn(2+) is bound at residue D281. Substrate is bound at residue D282.

Belongs to the metallo-dependent hydrolases superfamily. Adenosine and AMP deaminases family. Adenine deaminase type 2 subfamily. The cofactor is Zn(2+).

The catalysed reaction is adenine + H2O + H(+) = hypoxanthine + NH4(+). In terms of biological role, catalyzes the hydrolytic deamination of adenine to hypoxanthine. Plays an important role in the purine salvage pathway and in nitrogen catabolism. This is Adenine deaminase from Cupriavidus taiwanensis (strain DSM 17343 / BCRC 17206 / CCUG 44338 / CIP 107171 / LMG 19424 / R1) (Ralstonia taiwanensis (strain LMG 19424)).